The sequence spans 87 residues: Large ribosomal subunit protein bL31B (87 aa).

Belongs to the bacterial ribosomal protein bL31 family. Type B subfamily. Part of the 50S ribosomal subunit.

The polypeptide is Large ribosomal subunit protein bL31B (Paraburkholderia phymatum (strain DSM 17167 / CIP 108236 / LMG 21445 / STM815) (Burkholderia phymatum)).